We begin with the raw amino-acid sequence, 120 residues long: Ribosome-binding factor A (120 aa).

Belongs to the RbfA family. Monomer. Binds 30S ribosomal subunits, but not 50S ribosomal subunits or 70S ribosomes.

It localises to the cytoplasm. In terms of biological role, one of several proteins that assist in the late maturation steps of the functional core of the 30S ribosomal subunit. Associates with free 30S ribosomal subunits (but not with 30S subunits that are part of 70S ribosomes or polysomes). Required for efficient processing of 16S rRNA. May interact with the 5'-terminal helix region of 16S rRNA. The sequence is that of Ribosome-binding factor A from Rickettsia felis (strain ATCC VR-1525 / URRWXCal2) (Rickettsia azadi).